We begin with the raw amino-acid sequence, 284 residues long: Nucleotide-binding protein Sbal223_0704 (284 aa).

8-15 contacts ATP; sequence GRSGSGKS. A GTP-binding site is contributed by 56–59; it reads DVRN.

Belongs to the RapZ-like family.

In terms of biological role, displays ATPase and GTPase activities. The protein is Nucleotide-binding protein Sbal223_0704 of Shewanella baltica (strain OS223).